The sequence spans 314 residues: DNA-directed RNA polymerase subunit alpha (314 aa).

Residues 1–228 (MIEIEKPKIE…EHLSIFVNLT (228 aa)) are alpha N-terminal domain (alpha-NTD). Residues 245–314 (KEKVLEMTIE…DLGLSLRNEN (70 aa)) form an alpha C-terminal domain (alpha-CTD) region.

The protein belongs to the RNA polymerase alpha chain family. Homodimer. The RNAP catalytic core consists of 2 alpha, 1 beta, 1 beta' and 1 omega subunit. When a sigma factor is associated with the core the holoenzyme is formed, which can initiate transcription.

It carries out the reaction RNA(n) + a ribonucleoside 5'-triphosphate = RNA(n+1) + diphosphate. In terms of biological role, DNA-dependent RNA polymerase catalyzes the transcription of DNA into RNA using the four ribonucleoside triphosphates as substrates. This chain is DNA-directed RNA polymerase subunit alpha, found in Listeria innocua serovar 6a (strain ATCC BAA-680 / CLIP 11262).